We begin with the raw amino-acid sequence, 267 residues long: Meiosis-specific protein ISC10 (267 aa).

The segment covering 1–13 (MDVDERLHQDENQ) has biased composition (basic and acidic residues). Residues 1 to 26 (MDVDERLHQDENQTHPFSQKKSSSFL) are disordered. The span at 14-25 (THPFSQKKSSSF) shows a compositional bias: polar residues.

In terms of biological role, indispensable for spore formation. The polypeptide is Meiosis-specific protein ISC10 (ISC10) (Saccharomyces cerevisiae (strain ATCC 204508 / S288c) (Baker's yeast)).